The chain runs to 316 residues: RING finger protein 148 (316 aa).

A signal peptide spans 1-12 (MLLCVSCLSVNG). A glycan (N-linked (GlcNAc...) asparagine) is linked at Asn56. Residues 84 to 178 (VSGAVVLPEG…GNLKGMELLH (95 aa)) enclose the PA domain. The next 2 membrane-spanning stretches (helical) occupy residues 173–193 (GMELLHLIQQGVYVTIIIEVG) and 204–224 (VMSLFTFLAATVTYLFLYCAW). The RING-type; atypical zinc-finger motif lies at 269-310 (CVVCFDMYKAQDVIRILTCKHFFHKTCIDPWLLAHRTCPMCK).

Its subcellular location is the membrane. This chain is RING finger protein 148 (Rnf148), found in Mus musculus (Mouse).